Reading from the N-terminus, the 89-residue chain is Dynein light chain 2, cytoplasmic (89 aa).

The protein belongs to the dynein light chain family. Homodimer. The cytoplasmic dynein 1 complex consists of two catalytic heavy chains (HCs) and a number of non-catalytic subunits which present intermediate chains (ICs), light intermediate chains (LICs) and light chains (LCs); the composition seems to vary in respect to the IC, LIC and LC composition. The heavy chain homodimer serves as a scaffold for the probable homodimeric assembly of the respective non-catalytic subunits. Dynein ICs and LICs bind directly to the HC dimer and the LCs assemble on the IC dimer. Interacts with DYNC1I1. Interacts with BMF. Component of the myosin V motor complex. Interacts with BCAS1. Interacts with Basson/BSN. Interacts with AMBRA1 (via TQT motifs); tethering AMBRA1 to the cytoskeleton. Interacts with IQUB.

It is found in the cytoplasm. Its subcellular location is the cytoskeleton. In terms of biological role, acts as one of several non-catalytic accessory components of the cytoplasmic dynein 1 complex that are thought to be involved in linking dynein to cargos and to adapter proteins that regulate dynein function. Cytoplasmic dynein 1 acts as a motor for the intracellular retrograde motility of vesicles and organelles along microtubules. May play a role in changing or maintaining the spatial distribution of cytoskeletal structures. The chain is Dynein light chain 2, cytoplasmic (DYNLL2) from Homo sapiens (Human).